A 185-amino-acid polypeptide reads, in one-letter code: MELVVQSRETDKKSVIKKIRQQGGIPAVLYSGGKSLANIVVDARVFSKFLSTLESGALASTVFTLSYEGREIKALVKDIQYHVTTYDVIHLDFEELVDGRDVRLNIPIRCINTVDCVGVKLGGSLRQVIRCIRVVCKPKDIVPFLELDVQSLGLSQTLKLSDICIPEGIRPVTSLKEVAVTVARR.

The protein belongs to the bacterial ribosomal protein bL25 family. CTC subfamily. In terms of assembly, part of the 50S ribosomal subunit; part of the 5S rRNA/L5/L18/L25 subcomplex. Contacts the 5S rRNA. Binds to the 5S rRNA independently of L5 and L18.

This is one of the proteins that binds to the 5S RNA in the ribosome where it forms part of the central protuberance. The chain is Large ribosomal subunit protein bL25 from Chlamydia trachomatis serovar D (strain ATCC VR-885 / DSM 19411 / UW-3/Cx).